A 129-amino-acid polypeptide reads, in one-letter code: Small ribosomal subunit protein uS11 (129 aa).

It belongs to the universal ribosomal protein uS11 family. In terms of assembly, part of the 30S ribosomal subunit. Interacts with proteins S7 and S18. Binds to IF-3.

Located on the platform of the 30S subunit, it bridges several disparate RNA helices of the 16S rRNA. Forms part of the Shine-Dalgarno cleft in the 70S ribosome. The polypeptide is Small ribosomal subunit protein uS11 (Levilactobacillus brevis (strain ATCC 367 / BCRC 12310 / CIP 105137 / JCM 1170 / LMG 11437 / NCIMB 947 / NCTC 947) (Lactobacillus brevis)).